A 240-amino-acid polypeptide reads, in one-letter code: uncharacterized protein (240 aa).

The first 30 residues, 1–30 (MNKSGMSLIITMLLLIGTAIVIGAAYYAWS), serve as a signal peptide directing secretion.

This is an uncharacterized protein from Methanocaldococcus jannaschii (strain ATCC 43067 / DSM 2661 / JAL-1 / JCM 10045 / NBRC 100440) (Methanococcus jannaschii).